The primary structure comprises 448 residues: Methylenetetrahydrofolate--tRNA-(uracil-5-)-methyltransferase TrmFO (448 aa).

13–18 (GAGLAG) lines the FAD pocket.

The protein belongs to the MnmG family. TrmFO subfamily. The cofactor is FAD.

It localises to the cytoplasm. It carries out the reaction uridine(54) in tRNA + (6R)-5,10-methylene-5,6,7,8-tetrahydrofolate + NADH + H(+) = 5-methyluridine(54) in tRNA + (6S)-5,6,7,8-tetrahydrofolate + NAD(+). The enzyme catalyses uridine(54) in tRNA + (6R)-5,10-methylene-5,6,7,8-tetrahydrofolate + NADPH + H(+) = 5-methyluridine(54) in tRNA + (6S)-5,6,7,8-tetrahydrofolate + NADP(+). In terms of biological role, catalyzes the folate-dependent formation of 5-methyl-uridine at position 54 (M-5-U54) in all tRNAs. The sequence is that of Methylenetetrahydrofolate--tRNA-(uracil-5-)-methyltransferase TrmFO from Streptococcus pyogenes serotype M12 (strain MGAS2096).